The sequence spans 315 residues: Protein-methionine-sulfoxide reductase catalytic subunit MsrP (315 aa).

Residues 1-45 (MPSYRPPKIASSEITPRQVYLRRREFLGAATLGAMALYGAGKASA) constitute a signal peptide (tat-type signal). Residues Asn71, 74-75 (YE), Cys129, Thr164, Asn214, Arg219, and 230-232 (GIK) each bind Mo-molybdopterin.

The protein belongs to the MsrP family. As to quaternary structure, heterodimer of a catalytic subunit (MsrP) and a heme-binding subunit (MsrQ). Mo-molybdopterin serves as cofactor. In terms of processing, predicted to be exported by the Tat system. The position of the signal peptide cleavage has not been experimentally proven.

Its subcellular location is the periplasm. It catalyses the reaction L-methionyl-[protein] + a quinone + H2O = L-methionyl-(S)-S-oxide-[protein] + a quinol. The enzyme catalyses L-methionyl-[protein] + a quinone + H2O = L-methionyl-(R)-S-oxide-[protein] + a quinol. Functionally, part of the MsrPQ system that repairs oxidized periplasmic proteins containing methionine sulfoxide residues (Met-O), using respiratory chain electrons. Thus protects these proteins from oxidative-stress damage caused by reactive species of oxygen and chlorine generated by the host defense mechanisms. MsrPQ is essential for the maintenance of envelope integrity under bleach stress, rescuing a wide series of structurally unrelated periplasmic proteins from methionine oxidation. The catalytic subunit MsrP is non-stereospecific, being able to reduce both (R-) and (S-) diastereoisomers of methionine sulfoxide. The protein is Protein-methionine-sulfoxide reductase catalytic subunit MsrP of Rhizobium etli (strain ATCC 51251 / DSM 11541 / JCM 21823 / NBRC 15573 / CFN 42).